The primary structure comprises 83 residues: Large ribosomal subunit protein bL27 (83 aa).

This sequence belongs to the bacterial ribosomal protein bL27 family.

The chain is Large ribosomal subunit protein bL27 from Thermotoga neapolitana (strain ATCC 49049 / DSM 4359 / NBRC 107923 / NS-E).